The chain runs to 218 residues: Probable signal peptidase I-2 (218 aa).

The Cytoplasmic portion of the chain corresponds to 1–26; it reads MTENIVRETSKKKESPPENTWLELGK. A helical membrane pass occupies residues 27–43; that stretch reads TMVTAVILAIGIRTFVA. Over 44-218 the chain is Periplasmic; sequence EARYIPSSSM…ISPQTVPESR (175 aa). Catalysis depends on residues serine 52 and lysine 100.

Belongs to the peptidase S26 family.

The protein resides in the cell membrane. It carries out the reaction Cleavage of hydrophobic, N-terminal signal or leader sequences from secreted and periplasmic proteins.. The sequence is that of Probable signal peptidase I-2 (lepB2) from Synechocystis sp. (strain ATCC 27184 / PCC 6803 / Kazusa).